A 110-amino-acid chain; its full sequence is Large ribosomal subunit protein uL22 (110 aa).

Residues 85 to 95 (RGTASKIRKPT) show a composition bias toward basic residues. Residues 85 to 110 (RGTASKIRKPTSHVMVEVSKAQKKEA) form a disordered region.

The protein belongs to the universal ribosomal protein uL22 family. In terms of assembly, part of the 50S ribosomal subunit.

This protein binds specifically to 23S rRNA; its binding is stimulated by other ribosomal proteins, e.g. L4, L17, and L20. It is important during the early stages of 50S assembly. It makes multiple contacts with different domains of the 23S rRNA in the assembled 50S subunit and ribosome. Functionally, the globular domain of the protein is located near the polypeptide exit tunnel on the outside of the subunit, while an extended beta-hairpin is found that lines the wall of the exit tunnel in the center of the 70S ribosome. The chain is Large ribosomal subunit protein uL22 from Campylobacter curvus (strain 525.92).